Here is a 484-residue protein sequence, read N- to C-terminus: UDP-N-acetylmuramate--L-alanine ligase (484 aa).

Position 128-134 (128-134 (GTHGKTT)) interacts with ATP.

This sequence belongs to the MurCDEF family.

It is found in the cytoplasm. The catalysed reaction is UDP-N-acetyl-alpha-D-muramate + L-alanine + ATP = UDP-N-acetyl-alpha-D-muramoyl-L-alanine + ADP + phosphate + H(+). Its pathway is cell wall biogenesis; peptidoglycan biosynthesis. In terms of biological role, cell wall formation. The polypeptide is UDP-N-acetylmuramate--L-alanine ligase (Shewanella loihica (strain ATCC BAA-1088 / PV-4)).